The sequence spans 451 residues: Bifunctional protein GlmU (451 aa).

The tract at residues 1 to 236 (MDQTPSYSPP…YEELRGINSK (236 aa)) is pyrophosphorylase. UDP-N-acetyl-alpha-D-glucosamine-binding positions include 17 to 20 (LAAG), Lys31, Gln79, 84 to 85 (GT), 105 to 107 (YGD), Gly144, Glu162, Asn177, and Asn234. Asp107 lines the Mg(2+) pocket. Asn234 lines the Mg(2+) pocket. The tract at residues 237–257 (VELAEAEATVQIVLRRKALEN) is linker. The interval 258–451 (GVTMTAPETV…EIRRQLKGSV (194 aa)) is N-acetyltransferase. Arg323 and Lys341 together coordinate UDP-N-acetyl-alpha-D-glucosamine. Catalysis depends on His353, which acts as the Proton acceptor. 2 residues coordinate UDP-N-acetyl-alpha-D-glucosamine: Tyr356 and Asn367. Acetyl-CoA is bound by residues Ala370, 376–377 (NY), Ser395, Ala413, and Arg430.

The protein in the N-terminal section; belongs to the N-acetylglucosamine-1-phosphate uridyltransferase family. It in the C-terminal section; belongs to the transferase hexapeptide repeat family. Homotrimer. It depends on Mg(2+) as a cofactor.

The protein localises to the cytoplasm. The catalysed reaction is alpha-D-glucosamine 1-phosphate + acetyl-CoA = N-acetyl-alpha-D-glucosamine 1-phosphate + CoA + H(+). It carries out the reaction N-acetyl-alpha-D-glucosamine 1-phosphate + UTP + H(+) = UDP-N-acetyl-alpha-D-glucosamine + diphosphate. The protein operates within nucleotide-sugar biosynthesis; UDP-N-acetyl-alpha-D-glucosamine biosynthesis; N-acetyl-alpha-D-glucosamine 1-phosphate from alpha-D-glucosamine 6-phosphate (route II): step 2/2. It participates in nucleotide-sugar biosynthesis; UDP-N-acetyl-alpha-D-glucosamine biosynthesis; UDP-N-acetyl-alpha-D-glucosamine from N-acetyl-alpha-D-glucosamine 1-phosphate: step 1/1. Its pathway is bacterial outer membrane biogenesis; LPS lipid A biosynthesis. Catalyzes the last two sequential reactions in the de novo biosynthetic pathway for UDP-N-acetylglucosamine (UDP-GlcNAc). The C-terminal domain catalyzes the transfer of acetyl group from acetyl coenzyme A to glucosamine-1-phosphate (GlcN-1-P) to produce N-acetylglucosamine-1-phosphate (GlcNAc-1-P), which is converted into UDP-GlcNAc by the transfer of uridine 5-monophosphate (from uridine 5-triphosphate), a reaction catalyzed by the N-terminal domain. This Granulibacter bethesdensis (strain ATCC BAA-1260 / CGDNIH1) protein is Bifunctional protein GlmU.